The primary structure comprises 342 residues: Endoplasmic reticulum junction formation protein lunapark-1 (342 aa).

Topologically, residues 1–39 (MGNLFSRNKSPATELERVALSIDDLKKRLQTISSSNTNT) are cytoplasmic. The stretch at 13–34 (TELERVALSIDDLKKRLQTISS) forms a coiled coil. Residues 40 to 60 (LYYYYMSIVVILSIAMAHTWL) form a helical membrane-spanning segment. At 61-68 (RFEDPQKT) the chain is on the lumenal side. The helical transmembrane segment at 69-89 (YVACALMLGAIGIVLAGRYVI) threads the bilayer. At 90–342 (NGFFSWRTNR…ESKTMETEFH (253 aa)) the chain is on the cytoplasmic side. The stretch at 102-136 (QKLENAISQKTTLLDLVKETLKFKEAKEILDRYEK) forms a coiled coil. The tract at residues 161-191 (ADSSMFATPKQEQKRVETPTAQGPNSAMNSM) is disordered. The segment covering 179–191 (PTAQGPNSAMNSM) has biased composition (polar residues). A C4-type; plays a role in ER morphology zinc finger spans residues 236 to 261 (CSICHTHNGMSTPAEYPYISFRCFEC). The tract at residues 278-342 (RPPMGPKGIQ…ESKTMETEFH (65 aa)) is disordered. The segment covering 295-321 (SENTHNMMENQKPSTDLTPSASQNGSE) has biased composition (polar residues). Residues 322 to 342 (KGSDSENEKVPESKTMETEFH) show a composition bias toward basic and acidic residues.

The protein belongs to the lunapark family. As to expression, expressed in cell bodies along the ventral cord around the pharynx and the tail both in larvae and adults. Also expressed in muscles and hypodermal cells.

The protein localises to the endoplasmic reticulum membrane. Plays a role in tubular endoplasmic reticulum network formation and maintenance. May be involved in central nervous system development. Has a presynaptic role in neurotransmission. Likely to operate in synaptogenesis by regulating vesicular transport or localization. Required for correct localization of rab-3 and snb-1. The chain is Endoplasmic reticulum junction formation protein lunapark-1 (lnp-1) from Caenorhabditis elegans.